A 99-amino-acid chain; its full sequence is Integration host factor subunit alpha (99 aa).

It belongs to the bacterial histone-like protein family. Heterodimer of an alpha and a beta chain.

In terms of biological role, this protein is one of the two subunits of integration host factor, a specific DNA-binding protein that functions in genetic recombination as well as in transcriptional and translational control. The sequence is that of Integration host factor subunit alpha from Anaeromyxobacter sp. (strain Fw109-5).